We begin with the raw amino-acid sequence, 132 residues long: MNTDPIADYLTRIRNANAANHRVVEIPASNVKKEITKILFDQGYILSYKFEDTTAQGTIKIALKYDKLTKEPVIKKIQRISKPGLRKYAGSTEIPRILNGLGIAVVSTSHGVMTGKQAKANKVGGEVLCYVY.

This sequence belongs to the universal ribosomal protein uS8 family. As to quaternary structure, part of the 30S ribosomal subunit. Contacts proteins S5 and S12.

Its function is as follows. One of the primary rRNA binding proteins, it binds directly to 16S rRNA central domain where it helps coordinate assembly of the platform of the 30S subunit. This chain is Small ribosomal subunit protein uS8, found in Christiangramia forsetii (strain DSM 17595 / CGMCC 1.15422 / KT0803) (Gramella forsetii).